Here is a 369-residue protein sequence, read N- to C-terminus: Molybdenum import ATP-binding protein ModC (369 aa).

Residues 3 to 246 form the ABC transporter domain; the sequence is TRPEQASKDT…LDLPLAHGDS (244 aa). Residue 44 to 51 participates in ATP binding; sequence GPSGSGKT. A Mop domain is found at 305 to 369; it reads DTSILNILPA…AQIKGVAILG (65 aa).

It belongs to the ABC transporter superfamily. Molybdate importer (TC 3.A.1.8) family. As to quaternary structure, the complex is composed of two ATP-binding proteins (ModC), two transmembrane proteins (ModB) and a solute-binding protein (ModA).

The protein localises to the cell inner membrane. It catalyses the reaction molybdate(out) + ATP + H2O = molybdate(in) + ADP + phosphate + H(+). In terms of biological role, part of the ABC transporter complex ModABC involved in molybdenum import. Responsible for energy coupling to the transport system. The chain is Molybdenum import ATP-binding protein ModC from Albidiferax ferrireducens (strain ATCC BAA-621 / DSM 15236 / T118) (Rhodoferax ferrireducens).